An 886-amino-acid chain; its full sequence is Peptidyl-lysine N-acetyltransferase Pat (886 aa).

In terms of domain architecture, ATP-grasp spans 487 to 523 (QPILHAYGLHTLPTWIASDSAEAVHIAEQIGYPVALK). 513–524 (AEQIGYPVALKL) contacts ATP. Positions 726–881 (CLFRPILPED…GIVGLTLNLA (156 aa)) constitute an N-acetyltransferase domain.

In the N-terminal section; belongs to the acetate CoA ligase alpha subunit family. It in the central section; belongs to the acetate CoA ligase beta subunit family. As to quaternary structure, monomer in the absence of acetyl-CoA. Oligomerizes to a tetrameric form in the presence of acetyl-CoA.

It catalyses the reaction L-lysyl-[protein] + acetyl-CoA = N(6)-acetyl-L-lysyl-[protein] + CoA + H(+). With respect to regulation, exhibits positive cooperativity. It may be the result of acetyl-CoA binding to two distinct sites, or the result of subunit interactions. Its function is as follows. Acetylates and inactivates the acetyl-CoA synthase (Acs). Can also acetylate other central metabolic enzymes in response to environmental changes. The polypeptide is Peptidyl-lysine N-acetyltransferase Pat (pat) (Salmonella typhimurium (strain LT2 / SGSC1412 / ATCC 700720)).